The chain runs to 380 residues: Ribosomal RNA large subunit methyltransferase G (380 aa).

It belongs to the methyltransferase superfamily. RlmG family.

It localises to the cytoplasm. It carries out the reaction guanosine(1835) in 23S rRNA + S-adenosyl-L-methionine = N(2)-methylguanosine(1835) in 23S rRNA + S-adenosyl-L-homocysteine + H(+). Its function is as follows. Specifically methylates the guanine in position 1835 (m2G1835) of 23S rRNA. The protein is Ribosomal RNA large subunit methyltransferase G of Aeromonas hydrophila subsp. hydrophila (strain ATCC 7966 / DSM 30187 / BCRC 13018 / CCUG 14551 / JCM 1027 / KCTC 2358 / NCIMB 9240 / NCTC 8049).